The primary structure comprises 72 residues: Large ribosomal subunit protein bL31 (72 aa).

4 residues coordinate Zn(2+): cysteine 16, cysteine 18, cysteine 37, and cysteine 40.

It belongs to the bacterial ribosomal protein bL31 family. Type A subfamily. Part of the 50S ribosomal subunit. It depends on Zn(2+) as a cofactor.

Its function is as follows. Binds the 23S rRNA. The protein is Large ribosomal subunit protein bL31 of Idiomarina loihiensis (strain ATCC BAA-735 / DSM 15497 / L2-TR).